A 461-amino-acid chain; its full sequence is MDILFRIRGGFDLAFQLAPPKEMFIKNALRQVLNDLTTKLSSDALVFRICNSSVYLWPNSDANTGELTDSSACKSVVDLIQFDQEEDTKRKFMKKKDKKLTDMQQIVNIDLMLEISTPLGAVTPIIERENEEHHYINMSLPIDAVVSVAPEETWGKVRKLLVDAILNQLVDVEKCILRYMKGTSIVVPEPLHFLLPGGKNLVTVLYPSGIPDDQLQAYRKELHDLFKLPHDRPYLKRINAYHFPDELYKDGYIRNPHAYLSPPNIEGSMICMVQGTYAYHHYMQNRVDDNGWGCAYRSLQTVCSWFRHQGYTERAIPTHREIQQALVDAGDKPATFVGSRQWIGSIEVQLVLNQLIGVTSKILFVNQGSEMASQGRELANHFQNVGTPVMIGGGVLAHTILGVAWNETTGQIKFLILDPHYTGAEDLQVILEKGWCGWKGPDFWNKDAYYNLCLPQRPNAL.

Residues cysteine 294, aspartate 418, and histidine 420 contribute to the active site.

The protein belongs to the peptidase C78 family.

It is found in the endoplasmic reticulum. It localises to the cytoplasm. Its subcellular location is the nucleus. Its function is as follows. Thiol-dependent isopeptidase that specifically cleaves UFM1, a ubiquitin-like modifier protein, from conjugated proteins, such as CD274/PD-L1, CYB5R3, DDRGK1, MRE11, RPL26/uL24, TRIP4 and RPL26/uL24. While it is also able to mediate the processing of UFM1 precursors, a prerequisite for conjugation reactions, UFSP2 mainly acts as a protein deUFMylase that mediates deconjugation of UFM1 from target proteins. Mediates deUFMylation of RPL26/uL24, a critical step to release the UFM1 ribosome E3 ligase (UREL) complex during the recycling of 60S ribosome subunits from the endoplasmic reticulum. Catalyzes deUFMylation of TRIP4, regulating intracellular nuclear receptors transactivation and thereby regulate cell proliferation and differentiation. The chain is Ufm1-specific protease 2 from Rattus norvegicus (Rat).